Reading from the N-terminus, the 428-residue chain is 3-phosphoshikimate 1-carboxyvinyltransferase (428 aa).

Residues K21, S22, and R26 each contribute to the 3-phosphoshikimate site. K21 provides a ligand contact to phosphoenolpyruvate. 2 residues coordinate phosphoenolpyruvate: G91 and R119. Positions 164, 166, 313, and 340 each coordinate 3-phosphoshikimate. A phosphoenolpyruvate-binding site is contributed by Q166. Residue D313 is the Proton acceptor of the active site. 2 residues coordinate phosphoenolpyruvate: R344 and R386.

This sequence belongs to the EPSP synthase family. In terms of assembly, monomer.

Its subcellular location is the cytoplasm. It catalyses the reaction 3-phosphoshikimate + phosphoenolpyruvate = 5-O-(1-carboxyvinyl)-3-phosphoshikimate + phosphate. It functions in the pathway metabolic intermediate biosynthesis; chorismate biosynthesis; chorismate from D-erythrose 4-phosphate and phosphoenolpyruvate: step 6/7. In terms of biological role, catalyzes the transfer of the enolpyruvyl moiety of phosphoenolpyruvate (PEP) to the 5-hydroxyl of shikimate-3-phosphate (S3P) to produce enolpyruvyl shikimate-3-phosphate and inorganic phosphate. This is 3-phosphoshikimate 1-carboxyvinyltransferase from Campylobacter jejuni subsp. jejuni serotype O:23/36 (strain 81-176).